A 103-amino-acid chain; its full sequence is CLAVATA3/ESR (CLE)-related protein 16 (103 aa).

An N-terminal signal peptide occupies residues 1 to 21; sequence MEACSRKRRRRRAYTTSTTGY. A disordered region spans residues 71 to 103; sequence VSFTGQRREEENRDEVYKDDKRLVHTGPNPLHN. Positions 76–93 are enriched in basic and acidic residues; sequence QRREEENRDEVYKDDKRL. Pro98 is subject to Hydroxyproline. An O-linked (Ara...) hydroxyproline glycan is attached at Pro98.

Belongs to the CLV3/ESR signal peptide family. The O-glycosylation (arabinosylation) of the hydroxyproline Pro-98 enhances binding affinity of the CLE16p peptide for its receptor. As to expression, expressed in roots, stems, apex, seedlings, leaves, flowers and siliques.

Its subcellular location is the secreted. It is found in the extracellular space. In terms of biological role, extracellular signal peptide that regulates cell fate. Represses root apical meristem maintenance. Regulates the transition of protophloem cells from proliferation to differentiation, thus impinging on postembryonic growth capacity of the root meristem; this signaling pathway requires CRN and CLV2. This chain is CLAVATA3/ESR (CLE)-related protein 16, found in Arabidopsis thaliana (Mouse-ear cress).